Reading from the N-terminus, the 156-residue chain is Ribosomal RNA large subunit methyltransferase H (156 aa).

S-adenosyl-L-methionine-binding positions include L73, G104, and 123–128; that span reads LSSLTL.

This sequence belongs to the RNA methyltransferase RlmH family. Homodimer.

It is found in the cytoplasm. The enzyme catalyses pseudouridine(1915) in 23S rRNA + S-adenosyl-L-methionine = N(3)-methylpseudouridine(1915) in 23S rRNA + S-adenosyl-L-homocysteine + H(+). Specifically methylates the pseudouridine at position 1915 (m3Psi1915) in 23S rRNA. This chain is Ribosomal RNA large subunit methyltransferase H, found in Bordetella bronchiseptica (strain ATCC BAA-588 / NCTC 13252 / RB50) (Alcaligenes bronchisepticus).